A 275-amino-acid chain; its full sequence is Homeobox-leucine zipper protein ATHB-17 (275 aa).

Positions 95 to 143 are disordered; it reads SSPLSDEGSGGGRDQLRLDMNRLPSSEDGDDEEFSHDDGSAPPRKKLRL. The segment at residues 136–195 is a DNA-binding region (homeobox); that stretch reads PPRKKLRLTREQSRLLEDSFRQNHTLNPKQKEVLAKHLMLRPRQIEVWFQNRRARSKLKQ. Residues 203-224 are leucine-zipper; it reads LKRWFGSLTEENHRLHREVEEL. The tract at residues 252–275 is disordered; sequence AASPSRAVVPVPAKKTFPPQERDR.

The protein belongs to the HD-ZIP homeobox family. Class II subfamily.

It localises to the nucleus. Its function is as follows. Probable transcription factor. This chain is Homeobox-leucine zipper protein ATHB-17 (ATHB-17), found in Arabidopsis thaliana (Mouse-ear cress).